The following is a 149-amino-acid chain: Arginine repressor (149 aa).

The protein belongs to the ArgR family.

The protein localises to the cytoplasm. It functions in the pathway amino-acid biosynthesis; L-arginine biosynthesis [regulation]. Its function is as follows. Regulates arginine biosynthesis genes. In Bacillus pumilus (strain SAFR-032), this protein is Arginine repressor.